Reading from the N-terminus, the 662-residue chain is Glycogen debranching enzyme (662 aa).

The Nucleophile role is filled by Asp338. Residue Glu373 is the Proton donor of the active site.

This sequence belongs to the glycosyl hydrolase 13 family.

It carries out the reaction Hydrolysis of (1-&gt;6)-alpha-D-glucosidic linkages to branches with degrees of polymerization of three or four glucose residues in limit dextrin.. It functions in the pathway glycan degradation; glycogen degradation. Functionally, removes maltotriose and maltotetraose chains that are attached by 1,6-alpha-linkage to the limit dextrin main chain, generating a debranched limit dextrin. The protein is Glycogen debranching enzyme of Yersinia pestis.